The chain runs to 225 residues: 2-amino-5-formylamino-6-ribosylaminopyrimidin-4(3H)-one 5'-monophosphate deformylase (225 aa).

The Fe cation site is built by glutamate 28, histidine 30, aspartate 39, and histidine 107.

Belongs to the creatininase superfamily. FAPy deformylase family. Homodimer. Fe(2+) serves as cofactor. The cofactor is Zn(2+).

It carries out the reaction 2-amino-5-formylamino-6-(5-phospho-D-ribosylamino)pyrimidin-4(3H)-one + H2O = 2,5-diamino-6-(1-D-ribosylamino)pyrimidin-4(3H)-one 5'-phosphate + formate + H(+). Its pathway is cofactor biosynthesis; coenzyme F420 biosynthesis. It functions in the pathway cofactor biosynthesis; riboflavin biosynthesis. Catalyzes the hydrolysis of the formamide of 2-amino-5-formylamino-6-ribosylamino-4(3H)-pyrimidinone 5'-monophosphate (FAPy) to form 2,5-diamino-6-ribosylamino-4(3H)-pyrimidinone 5'-phosphate (APy). This Methanocaldococcus fervens (strain DSM 4213 / JCM 15782 / AG86) (Methanococcus fervens) protein is 2-amino-5-formylamino-6-ribosylaminopyrimidin-4(3H)-one 5'-monophosphate deformylase.